The chain runs to 353 residues: Tectonin-2 (353 aa).

One can recognise a Ricin B-type lectin domain in the interval 44 to 93 (WIFDNDGYIRLAANHNLVLDVNGGAAKEGNTVLSYPDKKDHAKNQLWVNK). 6 consecutive repeat copies span residues 138 to 173 (SAWERHEGELNVVAVGAGNHDVWGVNHLEHIYHWDG), 174 to 210 (SKWHQIEGAATNISVGLDGTVWCVNKAHEIYRLDRGT), 211 to 247 (NKWSIVPGELVQVSVGNSHNIWGVNHLDAIYKWNADS), 248 to 282 (NSWTFVDGQLTNVSVGHDGTVYGVNRAGNIYHYNG), 283 to 318 (NSWDAVSGELVQIHVANKDLIVGVNKAGHVYRLKHG), and 319 to 353 (KDWEKLEGELSWVAVGHGGELWGANSAHNIYKALL). The segment at 138 to 353 (SAWERHEGEL…SAHNIYKALL (216 aa)) is 6 X approximate tandem repeats.

Belongs to the tectonin family.

The protein localises to the cell surface. It is found in the cytoplasmic vesicle membrane. In terms of biological role, probably involved in bacterial recognition. May be a lectin that function as part of a transmembrane signaling complex during phagocytosis. This Physarum polycephalum (Slime mold) protein is Tectonin-2 (TECB).